A 302-amino-acid polypeptide reads, in one-letter code: tRNA-cytidine(32) 2-sulfurtransferase (302 aa).

The short motif at S43 to S48 is the PP-loop motif element. Positions 118, 121, and 209 each coordinate [4Fe-4S] cluster.

The protein belongs to the TtcA family. In terms of assembly, homodimer. Requires Mg(2+) as cofactor. It depends on [4Fe-4S] cluster as a cofactor.

It localises to the cytoplasm. The catalysed reaction is cytidine(32) in tRNA + S-sulfanyl-L-cysteinyl-[cysteine desulfurase] + AH2 + ATP = 2-thiocytidine(32) in tRNA + L-cysteinyl-[cysteine desulfurase] + A + AMP + diphosphate + H(+). It participates in tRNA modification. Its function is as follows. Catalyzes the ATP-dependent 2-thiolation of cytidine in position 32 of tRNA, to form 2-thiocytidine (s(2)C32). The sulfur atoms are provided by the cysteine/cysteine desulfurase (IscS) system. The polypeptide is tRNA-cytidine(32) 2-sulfurtransferase (Polynucleobacter asymbioticus (strain DSM 18221 / CIP 109841 / QLW-P1DMWA-1) (Polynucleobacter necessarius subsp. asymbioticus)).